The following is a 340-amino-acid chain: tRNA N6-adenosine threonylcarbamoyltransferase (340 aa).

The Fe cation site is built by His113 and His117. Residues 135 to 139, Asp169, Gly182, Asp186, and Asn274 each bind substrate; that span reads LVSGG. Fe cation is bound at residue Asp302.

The protein belongs to the KAE1 / TsaD family. It depends on Fe(2+) as a cofactor.

The protein resides in the cytoplasm. It catalyses the reaction L-threonylcarbamoyladenylate + adenosine(37) in tRNA = N(6)-L-threonylcarbamoyladenosine(37) in tRNA + AMP + H(+). Functionally, required for the formation of a threonylcarbamoyl group on adenosine at position 37 (t(6)A37) in tRNAs that read codons beginning with adenine. Is involved in the transfer of the threonylcarbamoyl moiety of threonylcarbamoyl-AMP (TC-AMP) to the N6 group of A37, together with TsaE and TsaB. TsaD likely plays a direct catalytic role in this reaction. This Mycolicibacterium vanbaalenii (strain DSM 7251 / JCM 13017 / BCRC 16820 / KCTC 9966 / NRRL B-24157 / PYR-1) (Mycobacterium vanbaalenii) protein is tRNA N6-adenosine threonylcarbamoyltransferase.